A 67-amino-acid chain; its full sequence is Small ribosomal subunit protein eS17 (67 aa).

The protein belongs to the eukaryotic ribosomal protein eS17 family.

This is Small ribosomal subunit protein eS17 from Korarchaeum cryptofilum (strain OPF8).